Reading from the N-terminus, the 492-residue chain is Catalase-4 (492 aa).

Catalysis depends on residues histidine 65 and asparagine 138. Tyrosine 348 is a heme binding site.

Belongs to the catalase family. Homotetramer. Requires heme as cofactor.

It is found in the peroxisome. It localises to the glyoxysome. The catalysed reaction is 2 H2O2 = O2 + 2 H2O. Its function is as follows. Occurs in almost all aerobically respiring organisms and serves to protect cells from the toxic effects of hydrogen peroxide. The sequence is that of Catalase-4 (CAT4) from Glycine max (Soybean).